Here is a 313-residue protein sequence, read N- to C-terminus: Porphobilinogen deaminase (313 aa).

S-(dipyrrolylmethanemethyl)cysteine is present on C242.

The protein belongs to the HMBS family. As to quaternary structure, monomer. The cofactor is dipyrromethane.

The catalysed reaction is 4 porphobilinogen + H2O = hydroxymethylbilane + 4 NH4(+). The protein operates within porphyrin-containing compound metabolism; protoporphyrin-IX biosynthesis; coproporphyrinogen-III from 5-aminolevulinate: step 2/4. In terms of biological role, tetrapolymerization of the monopyrrole PBG into the hydroxymethylbilane pre-uroporphyrinogen in several discrete steps. The chain is Porphobilinogen deaminase from Marinobacter nauticus (strain ATCC 700491 / DSM 11845 / VT8) (Marinobacter aquaeolei).